Reading from the N-terminus, the 450-residue chain is Vimentin beta (450 aa).

The segment at 1 to 81 (MSSRTSTSSY…FGLADAINTE (81 aa)) is head. Over residues 24 to 38 (STYSSRQYSSPGRTT) the composition is skewed to polar residues. The tract at residues 24 to 56 (STYSSRQYSSPGRTTSRVSYSSASSTSPSLYMS) is disordered. The span at 39-56 (SRVSYSSASSTSPSLYMS) shows a compositional bias: low complexity. Positions 82–117 (FKANRTNEKAEMQHVNDRFASYIEEVRFLEQQNKIL) are coil 1A. The 309-residue stretch at 89–397 (EKAEMQHVND…NLLEGEEYRI (309 aa)) folds into the IF rod domain. The tract at residues 118–139 (TAELEQMRGKGSSRVGDLYEDE) is linker 1. The segment at 140-231 (MRELRRQVDQ…KLHDEELAEL (92 aa)) is coil 1B. Residues 232–254 (QMQIQERHVQIDMEVAKPDLTAA) are linker 12. The interval 255-393 (LRDVRQQYET…ATYRNLLEGE (139 aa)) is coil 2. The interval 394–450 (EYRITTPFPNLSSLSLRESMKEIRPAMDSLSKKVVIKTIETRDGHIINQSTQKDNLE) is tail.

The protein belongs to the intermediate filament family. In terms of assembly, homomer. Post-translationally, one of the most prominent phosphoproteins in various cells of mesenchymal origin. Phosphorylation is enhanced during cell division, at which time vimentin filaments are significantly reorganized. Expressed in low amounts in retina, optic nerve, brain, and spinal cord and in very high amounts in eye lens.

In terms of biological role, vimentins are class-III intermediate filaments found in various non-epithelial cells, especially mesenchymal cells. Vimentin is attached to the nucleus, endoplasmic reticulum, and mitochondria, either laterally or terminally. The sequence is that of Vimentin beta from Carassius auratus (Goldfish).